The following is a 325-amino-acid chain: L-lactate dehydrogenase 1 (325 aa).

NAD(+) is bound by residues V17, D38, K43, Y68, and 82 to 83; that span reads GA. Residues Q85, R91, and 123 to 126 contribute to the substrate site; that span reads NPVD. Residues 121-123 and S146 each bind NAD(+); that span reads AAN. 151–154 serves as a coordination point for substrate; that stretch reads DTAR. R156 and H171 together coordinate beta-D-fructose 1,6-bisphosphate. Residue H178 is the Proton acceptor of the active site. Phosphotyrosine is present on Y223. Position 232 (T232) interacts with substrate.

The protein belongs to the LDH/MDH superfamily. LDH family. Homotetramer.

It localises to the cytoplasm. It catalyses the reaction (S)-lactate + NAD(+) = pyruvate + NADH + H(+). The protein operates within fermentation; pyruvate fermentation to lactate; (S)-lactate from pyruvate: step 1/1. With respect to regulation, allosterically activated by fructose 1,6-bisphosphate (FBP). Its function is as follows. Catalyzes the conversion of lactate to pyruvate. The chain is L-lactate dehydrogenase 1 from Lactococcus lactis subsp. cremoris (Streptococcus cremoris).